Reading from the N-terminus, the 1431-residue chain is 1-phosphatidylinositol 4,5-bisphosphate phosphodiesterase beta egl-8 (1431 aa).

One can recognise a PI-PLC X-box domain in the interval 340–491 (MDMDQPLCHY…LRKKILIKNK (152 aa)). The active site involves His355. Residues Asn356, Glu385, and Asp387 each contribute to the Ca(2+) site. His403 is an active-site residue. Glu437 contributes to the Ca(2+) binding site. The substrate site is built by Lys489 and Lys491. Disordered stretches follow at residues 510–601 (KLDE…MVPD) and 632–692 (RRQS…SGPS). Residues 543 to 556 (EEVDDDTSDDDDDP) show a composition bias toward acidic residues. Composition is skewed to low complexity over residues 572–586 (NTTSNNGSNRSARSS), 652–661 (SSSSPATPSI), and 668–692 (ATSSGSTSSITITTTGCSTSSSGPS). A PI-PLC Y-box domain is found at 758–874 (LSSLVNYTHP…GYLLKPDFLR (117 aa)). Positions 787 and 814 each coordinate substrate. The 126-residue stretch at 877-1002 (DRTFDPFSES…SLRSDTNQSF (126 aa)) folds into the C2 domain. 3 disordered regions span residues 1072 to 1119 (QPPR…VAVD), 1150 to 1176 (DLRKKHQKQRDSIQKQQPARRRNSSIA), and 1188 to 1216 (NNRRSTKKEKGSRRSLTASVSSGCGSASG). Residues 1074 to 1113 (PRQNGSSADLLANNGQTGSARGDQTSSMASSTIRSPNEQP) are compositionally biased toward polar residues. The stretch at 1135 to 1166 (KAFAKLLKRFQKELDDLRKKHQKQRDSIQKQQ) forms a coiled coil. Basic and acidic residues predominate over residues 1150–1162 (DLRKKHQKQRDSI). Residues 1191–1200 (RSTKKEKGSR) show a composition bias toward basic residues. Over residues 1204–1216 (TASVSSGCGSASG) the composition is skewed to low complexity. Coiled coils occupy residues 1288 to 1318 (DEEEFELKKVQLKEQFDLLRKLMSEAQKNQM) and 1368 to 1402 (EKNLKMFVEERKRLAMKAQKHEEQLTKRHLDQLEQ).

Ca(2+) serves as cofactor. In terms of tissue distribution, expressed in most or all neurons with high expression in the head and tail ganglia and low expression in the motor neurons of the ventral cord. Expressed in the intestine (at protein level). In males, expressed in vas deferens, spicule protractor muscles, diagonal muscles and a male-specific neuron.

The protein localises to the perikaryon. The protein resides in the cell projection. It localises to the axon. It is found in the synapse. Its subcellular location is the cell junction. The protein localises to the adherens junction. The catalysed reaction is a 1,2-diacyl-sn-glycero-3-phospho-(1D-myo-inositol-4,5-bisphosphate) + H2O = 1D-myo-inositol 1,4,5-trisphosphate + a 1,2-diacyl-sn-glycerol + H(+). Functionally, mediates the production of the second messenger molecules diacylglycerol (DAG) and inositol 1,4,5-trisphosphate (IP3) which plays an important role in the regulation of intracellular signaling cascades. Required in the nervous system to modulate neuronal activity. Facilitates synaptic transmission at neuromuscular junctions by regulating the release of acetylcholine from the motor neurons and thus affecting locomotion. Plays a role in efficient egg laying and defecation. Involved in axon regeneration after injury. Plays a role in male mating behavior by regulating spicule insertion and sperm transfer. By triggering Ca(2+) transient via IP3-mediated activation of IPR3 receptor itr-1 in ASH sensory neurons, regulates avoidance behavior in response to nose touch. By activating tpa-1 via DAG production, required for the expression of antimicrobial peptide nlp-29 in response to fungal infection. During embryogenesis, may play a role in epidermal morphogenesis together with plc-1. This chain is 1-phosphatidylinositol 4,5-bisphosphate phosphodiesterase beta egl-8, found in Caenorhabditis elegans.